The chain runs to 190 residues: Small ribosomal subunit protein eS7 (190 aa).

Belongs to the eukaryotic ribosomal protein eS7 family.

The chain is Small ribosomal subunit protein eS7 (RPS7) from Avicennia marina (Grey mangrove).